A 456-amino-acid chain; its full sequence is L-2-hydroxyglutarate dehydrogenase, mitochondrial (456 aa).

The N-terminal 20 residues, 1–20, are a transit peptide targeting the mitochondrion; the sequence is MLKTSFLLSKRNAVSLSRVL.

The protein belongs to the L2HGDH family. FAD is required as a cofactor.

Its subcellular location is the mitochondrion. The enzyme catalyses (S)-2-hydroxyglutarate + A = 2-oxoglutarate + AH2. This chain is L-2-hydroxyglutarate dehydrogenase, mitochondrial, found in Nematostella vectensis (Starlet sea anemone).